A 334-amino-acid chain; its full sequence is Aspartate carbamoyltransferase catalytic subunit (334 aa).

2 residues coordinate carbamoyl phosphate: Arg71 and Thr72. Lys99 provides a ligand contact to L-aspartate. Positions 121, 151, and 154 each coordinate carbamoyl phosphate. Positions 184 and 239 each coordinate L-aspartate. Positions 280 and 281 each coordinate carbamoyl phosphate.

This sequence belongs to the aspartate/ornithine carbamoyltransferase superfamily. ATCase family. As to quaternary structure, heterododecamer (2C3:3R2) of six catalytic PyrB chains organized as two trimers (C3), and six regulatory PyrI chains organized as three dimers (R2).

The enzyme catalyses carbamoyl phosphate + L-aspartate = N-carbamoyl-L-aspartate + phosphate + H(+). The protein operates within pyrimidine metabolism; UMP biosynthesis via de novo pathway; (S)-dihydroorotate from bicarbonate: step 2/3. In terms of biological role, catalyzes the condensation of carbamoyl phosphate and aspartate to form carbamoyl aspartate and inorganic phosphate, the committed step in the de novo pyrimidine nucleotide biosynthesis pathway. The sequence is that of Aspartate carbamoyltransferase catalytic subunit from Pseudomonas putida (Arthrobacter siderocapsulatus).